The chain runs to 140 residues: 3-hydroxyacyl-[acyl-carrier-protein] dehydratase FabZ (140 aa).

Histidine 48 is a catalytic residue.

This sequence belongs to the thioester dehydratase family. FabZ subfamily.

The protein localises to the cytoplasm. It catalyses the reaction a (3R)-hydroxyacyl-[ACP] = a (2E)-enoyl-[ACP] + H2O. Involved in unsaturated fatty acids biosynthesis. Catalyzes the dehydration of short chain beta-hydroxyacyl-ACPs and long chain saturated and unsaturated beta-hydroxyacyl-ACPs. This chain is 3-hydroxyacyl-[acyl-carrier-protein] dehydratase FabZ, found in Caldicellulosiruptor bescii (strain ATCC BAA-1888 / DSM 6725 / KCTC 15123 / Z-1320) (Anaerocellum thermophilum).